Reading from the N-terminus, the 347-residue chain is tRNA N6-adenosine threonylcarbamoyltransferase (347 aa).

Histidine 113 and histidine 117 together coordinate Fe cation. Residues 136–140 (IVSGG), aspartate 170, glycine 183, aspartate 187, and asparagine 282 contribute to the substrate site. Residue aspartate 310 participates in Fe cation binding.

Belongs to the KAE1 / TsaD family. Requires Fe(2+) as cofactor.

It is found in the cytoplasm. The catalysed reaction is L-threonylcarbamoyladenylate + adenosine(37) in tRNA = N(6)-L-threonylcarbamoyladenosine(37) in tRNA + AMP + H(+). Required for the formation of a threonylcarbamoyl group on adenosine at position 37 (t(6)A37) in tRNAs that read codons beginning with adenine. Is involved in the transfer of the threonylcarbamoyl moiety of threonylcarbamoyl-AMP (TC-AMP) to the N6 group of A37, together with TsaE and TsaB. TsaD likely plays a direct catalytic role in this reaction. The chain is tRNA N6-adenosine threonylcarbamoyltransferase from Bifidobacterium adolescentis (strain ATCC 15703 / DSM 20083 / NCTC 11814 / E194a).